The primary structure comprises 71 residues: MRKSFYTWLMTERNPKSNSPKAILADLAFEEAAFPKHTDDFDEVSRFLEEHASFSFNLGDFDAIWQEYLEH.

It belongs to the UPF0346 family.

In Streptococcus pneumoniae (strain Taiwan19F-14), this protein is UPF0346 protein SPT_1257.